A 338-amino-acid chain; its full sequence is Anthocyanidin reductase ((2S)-flavan-3-ol-forming) (338 aa).

NADP(+)-binding positions include 18–21 (TGFV), lysine 48, 87–90 (VATP), and tyrosine 168.

Belongs to the NAD(P)-dependent epimerase/dehydratase family. Dihydroflavonol-4-reductase subfamily.

The enzyme catalyses a (2S,3R)-flavan-3-ol + 2 NADP(+) = an anthocyanidin with a 3-hydroxy group + 2 NADPH + 2 H(+). It carries out the reaction a (2S,3S)-flavan-3-ol + 2 NADP(+) = an anthocyanidin with a 3-hydroxy group + 2 NADPH + 2 H(+). It functions in the pathway secondary metabolite biosynthesis; flavonoid biosynthesis. Produces the terminal flavan-3-ol monomers required for the formation of proanthocyanidins or condensed tannins in leaves and flowers, as well as in the skin and seeds of developing berries. Behaves as a reductase and as a C-3 epimerase. Catalyzes the double reduction of anthocyanidins, producing a mixture of (2S,3S)- and (2S,3R)-flavan-3-ols. The enzyme catalyzes sequential hydride transfers to C-2 and C-4, respectively and epimerization at C-3 is achieved by tautomerization that occurs between the two hydride transfers. Converts cyanidin, pelargonidin and delphinidin into catechin and epicatechin, afzelechin and epiafzelechin, and gallocatechin and epigallocatechin respectively. The sequence is that of Anthocyanidin reductase ((2S)-flavan-3-ol-forming) from Vitis vinifera (Grape).